The primary structure comprises 1318 residues: Maestro heat-like repeat family member 5 (1318 aa).

Residues 1–38 (MDRQCSERPYSCTPTGRVSSAVSQNSRISPPVSTSMKD) form a disordered region. Positions 12–38 (CTPTGRVSSAVSQNSRISPPVSTSMKD) are enriched in polar residues. The HEAT 1 repeat unit spans residues 581–618 (DELHFLLSHLYIWLASEKAHERQRAVHSCMILLKFLNH). The interval 676–695 (ESQAPKELSQAHSDGAPLWN) is disordered. HEAT repeat units follow at residues 769–811 (GAKL…SHTC), 840–880 (PTSH…LLAA), 996–1033 (RQIP…SPVL), 1037–1074 (LPKQ…HPDK), 1076–1113 (SLLQ…RLGA), 1118–1155 (SQSL…AMAD), 1164–1200 (QVHQ…LLRW), and 1278–1315 (VDTN…VSAR).

In Homo sapiens (Human), this protein is Maestro heat-like repeat family member 5 (MROH5).